A 589-amino-acid polypeptide reads, in one-letter code: F-box only protein 24 (589 aa).

An F-box domain is found at 23–69; it reads PISVQLFPPELVEHIVSFLPVKDLVALGQTCHYFHEVCDAEGVWRRI. The stretch at 386–435 is one RCC1 repeat; that stretch reads GRIFMQGNNRYGQLGTGDKMDRGEPTQVHYLQRPIALWCGLNHSLVLSQT. A disordered region spans residues 506-526; it reads VGGSPEPSQGAGAPQDPGGTA.

Directly interacts with SKP1 and CUL1.

In terms of biological role, substrate-recognition component of the SCF (SKP1-CUL1-F-box protein)-type E3 ubiquitin ligase complex. In Mus musculus (Mouse), this protein is F-box only protein 24 (Fbxo24).